Consider the following 75-residue polypeptide: Venom serine protease inhibitor BiVSPI (75 aa).

A signal peptide spans 1-20 (MSRILFVFLAVMAIFSTSFG). Intrachain disulfides connect Cys-23–Cys-55, Cys-32–Cys-51, Cys-35–Cys-47, Cys-39–Cys-75, and Cys-57–Cys-69. One can recognise a TIL domain in the interval 23–75 (CGLNEEFKSCGSCEPTCAKPRVTICTMECKIGCQCKSGYLRNGEGTCVLPEKC).

This sequence belongs to the serine protease inhibitor-like (TIL domain-containing) family. Post-translationally, may be O-glycosylated. As to expression, expressed by the venom gland (at protein level) and expressed in fat body.

It is found in the secreted. It localises to the target cell membrane. Its function is as follows. Antimicrobial venom serine protease inhibitor. Exhibits inhibitory activity against chymotrypsin (IC(50)=19.56 nM, Ki=15.24 nM) and microbial serine proteases, such as subtilisin A (IC(50)=6.57 nM, Ki=6.83 nM) and proteinase K (IC(50)=7.11 nM, Ki=7.02 nM). Has not activity against trypsin, plasmin, tPA, thrombin, factor Xa or elastase. Binds and inhibits Gram-positive bacteria (B.subtilis (MIC=29.45 uM), B.thuringiensis (MIC=91.03 uM)) and the entomopathogenic fungus B.bassiana (MIC=30.09 uM) but not to E.coli. The polypeptide is Venom serine protease inhibitor BiVSPI (Bombus ignitus (Bumblebee)).